Reading from the N-terminus, the 440-residue chain is MPISKIHSRYVYDSRGNPTVEVDIVTETGLHRAIVPSGASTGSHEACELRDGDKSKWAGKGVTKAVANVNEIIAPALIKENLDVKDQAAVDAFLNKLDGTTNKTKIGANAILGVSMAVAKAAAAEKRVPLYAHISDLSGTKKPFVLPVPFMNVVNGGSHAGGRLAFQEFMIVPSGAPSFTEAMRQGAEVYQKLKSLTKKRYGQSAGNVGDEGGVAPDIQTAEEALDLITDAIEEAGYTGQIKIAMDVASSEFYKADEKKYDLDFKNPDSDKSKWITYEQLADQYKQLAAKYPIVSIEDPFAEDDWEAWSYFYKTSGSDFQIVGDDLTVTNPEFIKKAIETKACNALLLKVNQIGTITEAINAAKDSFAAGWGVMVSHRSGETEDVTIADIVVGLRAGQIKTGAPARSERLAKLNQILRIEEELGDKAVYAGDNFRTAINL.

An igE-binding determinant region spans residues 120–189 (KAAAAEKRVP…TEAMRQGAEV (70 aa)). The substrate site is built by histidine 159 and glutamate 168. Glutamate 211 serves as the catalytic Proton donor. Mg(2+) is bound by residues aspartate 246, glutamate 297, and aspartate 324. Substrate contacts are provided by glutamate 297 and aspartate 324. The active-site Proton acceptor is the lysine 349. Substrate-binding positions include 376–379 (SHRS) and lysine 400.

Belongs to the enolase family. As to quaternary structure, homodimer. Mg(2+) is required as a cofactor.

Its subcellular location is the cytoplasm. The catalysed reaction is (2R)-2-phosphoglycerate = phosphoenolpyruvate + H2O. It participates in carbohydrate degradation; glycolysis; pyruvate from D-glyceraldehyde 3-phosphate: step 4/5. The sequence is that of Enolase (ENO) from Davidiella tassiana (Mycosphaerella tassiana).